The chain runs to 999 residues: Hypoxia up-regulated protein 1 (999 aa).

Residues 1-32 (MAATVRRQRPRRLLCWALVAVLLADLLALSDT) form the signal peptide. 3 N-linked (GlcNAc...) asparagine glycosylation sites follow: asparagine 155, asparagine 222, and asparagine 515. The disordered stretch occupies residues 564 to 694 (VEDSPEEEST…KKQKPARKQK (131 aa)). Residue serine 567 is modified to Phosphoserine. Positions 574–583 (LTKLGNTISS) are enriched in polar residues. Asparagine 596 carries an N-linked (GlcNAc...) asparagine glycan. Composition is skewed to basic and acidic residues over residues 611–626 (GSKDEPAEQGELKEEA) and 641–668 (PKGDAAREGETPDEKESGDKSEAQKPNE). Residues asparagine 830, asparagine 862, and asparagine 869 are each glycosylated (N-linked (GlcNAc...) asparagine). Lysine 883 is modified (N6-acetyllysine). The segment at 909–999 (AKFTKPRPRP…QKRPLKNDEL (91 aa)) is disordered. N-linked (GlcNAc...) asparagine glycosylation is found at asparagine 922 and asparagine 931. Positions 949–962 (EEAKAILEPDKEGL) are enriched in basic and acidic residues. The Prevents secretion from ER signature appears at 996-999 (NDEL).

The protein belongs to the heat shock protein 70 family. Part of a large chaperone multiprotein complex comprising DNAJB11, HSP90B1, HSPA5, HYOU, PDIA2, PDIA4, PDIA6, PPIB, SDF2L1, UGGT1 and very small amounts of ERP29, but not, or at very low levels, CALR nor CANX. Selectively expressed by cultured astrocytes but not endothelial cells, microglia or neurons.

It is found in the endoplasmic reticulum lumen. Has a pivotal role in cytoprotective cellular mechanisms triggered by oxygen deprivation. Promotes HSPA5/BiP-mediated ATP nucleotide exchange and thereby activates the unfolded protein response (UPR) pathway in the presence of endoplasmic reticulum stress. May play a role as a molecular chaperone and participate in protein folding. The chain is Hypoxia up-regulated protein 1 (Hyou1) from Rattus norvegicus (Rat).